A 120-amino-acid polypeptide reads, in one-letter code: Glycine cleavage system H protein (120 aa).

The Lipoyl-binding domain occupies 19 to 101 (DGTVGITDHA…YEGGWLFKLE (83 aa)). Residue K60 is modified to N6-lipoyllysine.

This sequence belongs to the GcvH family. As to quaternary structure, the glycine cleavage system is composed of four proteins: P, T, L and H. It depends on (R)-lipoate as a cofactor.

In terms of biological role, the glycine cleavage system catalyzes the degradation of glycine. The H protein shuttles the methylamine group of glycine from the P protein to the T protein. This chain is Glycine cleavage system H protein, found in Deinococcus deserti (strain DSM 17065 / CIP 109153 / LMG 22923 / VCD115).